The primary structure comprises 110 residues: MALWMRLLPLLALLALWAPAPTRAFVNQHLCGSHLVEALYLVCGERGFFYTPKARREVEDLQVRDVELAGAPGEGGLQPLALEGALQKRGIVEQCCTSICSLYQLENYCN.

The first 24 residues, 1–24, serve as a signal peptide directing secretion; the sequence is MALWMRLLPLLALLALWAPAPTRA. Disulfide bonds link C31–C96, C43–C109, and C95–C100. Positions 57 to 87 are cleaved as a propeptide — c peptide; sequence EVEDLQVRDVELAGAPGEGGLQPLALEGALQ.

This sequence belongs to the insulin family. In terms of assembly, heterodimer of a B chain and an A chain linked by two disulfide bonds.

The protein localises to the secreted. Its function is as follows. Insulin decreases blood glucose concentration. It increases cell permeability to monosaccharides, amino acids and fatty acids. It accelerates glycolysis, the pentose phosphate cycle, and glycogen synthesis in liver. The protein is Insulin (INS) of Canis lupus familiaris (Dog).